Reading from the N-terminus, the 225-residue chain is Uracil-DNA glycosylase (225 aa).

The Proton acceptor role is filled by Asp-68.

It belongs to the uracil-DNA glycosylase (UDG) superfamily. UNG family.

The protein localises to the cytoplasm. The enzyme catalyses Hydrolyzes single-stranded DNA or mismatched double-stranded DNA and polynucleotides, releasing free uracil.. Functionally, excises uracil residues from the DNA which can arise as a result of misincorporation of dUMP residues by DNA polymerase or due to deamination of cytosine. This is Uracil-DNA glycosylase from Mycolicibacterium vanbaalenii (strain DSM 7251 / JCM 13017 / BCRC 16820 / KCTC 9966 / NRRL B-24157 / PYR-1) (Mycobacterium vanbaalenii).